The chain runs to 294 residues: METISRQNKPQQQLIGAHMSAAGGVHKAVERAEAAGATALQVFTRNQRQWNAPPLEEHDAELFTAAVRRWGGYPVSSHASYLINPAADTPEGAERSVALMADELQRAGRLGIEMVVVHPGAHKGQGEAAGAALAAARLDEALERCGSPAVMVLLENTAGQGTMLGASFAGLAAVIEASRMPERYGICLDTAHAFGAGYDLRDAALYDAAIRELDVCAGLDRLRLVHANDSLTGLGSRRDRHTHIGQGELGEAAFRLLMRDERLHHVPKVLETPKGKGPEEDMMNMAVLRRLACP.

His78, His118, Glu155, Asp189, His192, His226, Asp239, His241, and Glu271 together coordinate Zn(2+).

Belongs to the AP endonuclease 2 family. The cofactor is Zn(2+).

It catalyses the reaction Endonucleolytic cleavage to 5'-phosphooligonucleotide end-products.. Endonuclease IV plays a role in DNA repair. It cleaves phosphodiester bonds at apurinic or apyrimidinic (AP) sites, generating a 3'-hydroxyl group and a 5'-terminal sugar phosphate. The chain is Probable endonuclease 4 from Oleidesulfovibrio alaskensis (strain ATCC BAA-1058 / DSM 17464 / G20) (Desulfovibrio alaskensis).